The following is a 206-amino-acid chain: Large ribosomal subunit protein uL4 (206 aa).

Positions 47–94 (NRAQKDRSEINKSTKKPFRQKGTGRARAGRASSPLWRGGGKVFPNSPD) are disordered. Residues 49 to 58 (AQKDRSEINK) show a composition bias toward basic and acidic residues. The span at 59–74 (STKKPFRQKGTGRARA) shows a compositional bias: basic residues.

This sequence belongs to the universal ribosomal protein uL4 family. Part of the 50S ribosomal subunit.

Its function is as follows. One of the primary rRNA binding proteins, this protein initially binds near the 5'-end of the 23S rRNA. It is important during the early stages of 50S assembly. It makes multiple contacts with different domains of the 23S rRNA in the assembled 50S subunit and ribosome. Functionally, forms part of the polypeptide exit tunnel. This Laribacter hongkongensis (strain HLHK9) protein is Large ribosomal subunit protein uL4.